Reading from the N-terminus, the 301-residue chain is ATP synthase subunit gamma, mitochondrial (301 aa).

It belongs to the ATPase gamma chain family. In terms of assembly, F-type ATPases have 2 components, CF(1) - the catalytic core - and CF(0) - the membrane proton channel. CF(1) has five subunits: alpha(3), beta(3), gamma(1), delta(1), epsilon(1). CF(0) has three main subunits: a, b and c.

The protein localises to the mitochondrion. It is found in the mitochondrion inner membrane. Its function is as follows. Mitochondrial membrane ATP synthase (F(1)F(0) ATP synthase or Complex V) produces ATP from ADP in the presence of a proton gradient across the membrane which is generated by electron transport complexes of the respiratory chain. F-type ATPases consist of two structural domains, F(1) - containing the extramembraneous catalytic core, and F(0) - containing the membrane proton channel, linked together by a central stalk and a peripheral stalk. During catalysis, ATP synthesis in the catalytic domain of F(1) is coupled via a rotary mechanism of the central stalk subunits to proton translocation. Part of the complex F(1) domain and the central stalk which is part of the complex rotary element. The gamma subunit protrudes into the catalytic domain formed of alpha(3)beta(3). Rotation of the central stalk against the surrounding alpha(3)beta(3) subunits leads to hydrolysis of ATP in three separate catalytic sites on the beta subunits. The sequence is that of ATP synthase subunit gamma, mitochondrial (atp3) from Schizosaccharomyces pombe (strain 972 / ATCC 24843) (Fission yeast).